The following is a 2131-amino-acid chain: Protein Ycf2 (2131 aa).

Glycine 1484–serine 1491 serves as a coordination point for ATP.

The protein belongs to the Ycf2 family.

Its subcellular location is the plastid. The protein localises to the chloroplast stroma. In terms of biological role, probable ATPase of unknown function. Its presence in a non-photosynthetic plant (Epifagus virginiana) and experiments in tobacco indicate that it has an essential function which is probably not related to photosynthesis. The sequence is that of Protein Ycf2 (ycf2-A) from Spinacia oleracea (Spinach).